Reading from the N-terminus, the 943-residue chain is Leucine--tRNA ligase (943 aa).

Residues 40–51 (PYPSGAGLHVGH) carry the 'HIGH' region motif. Positions 717 to 721 (KMSKS) match the 'KMSKS' region motif. An ATP-binding site is contributed by K720.

The protein belongs to the class-I aminoacyl-tRNA synthetase family.

It is found in the cytoplasm. The catalysed reaction is tRNA(Leu) + L-leucine + ATP = L-leucyl-tRNA(Leu) + AMP + diphosphate. The protein is Leucine--tRNA ligase of Bacteroides fragilis (strain YCH46).